A 126-amino-acid polypeptide reads, in one-letter code: Small ribosomal subunit protein uS13 (126 aa).

The disordered stretch occupies residues 101-126; sequence QKTKNNCRTRKGKKKTVANKKKKINK.

This sequence belongs to the universal ribosomal protein uS13 family. In terms of assembly, part of the 30S ribosomal subunit. Forms a loose heterodimer with protein S19. Forms two bridges to the 50S subunit in the 70S ribosome.

In terms of biological role, located at the top of the head of the 30S subunit, it contacts several helices of the 16S rRNA. In the 70S ribosome it contacts the 23S rRNA (bridge B1a) and protein L5 of the 50S subunit (bridge B1b), connecting the 2 subunits; these bridges are implicated in subunit movement. Contacts the tRNAs in the A and P-sites. This is Small ribosomal subunit protein uS13 from Karelsulcia muelleri (strain GWSS) (Sulcia muelleri).